The sequence spans 290 residues: MMTSNSYWQRLKVAFQYVMPQIYLTQIAGWFAKQKWGKITHFVIKAFAKKYNIDMSIAQKGQFSDYASFNEFFIRPLKENARPINQNPTALCLPADGRISECGHIDDNLLLQAKGHFFSLEDLLAEDKELVETFKNGEFVTTYLSPRDYHRVHMPCDATLRKMIYVPGDLFSVNPFLAQYVPNLFARNERVICVFDTEFGTMVQILVGATITASIGTTWAGVINPPRHNEVKTWTYEGESAVKLLKGQEMGWFQLGSTVINLFQANQVRLADHLSVNEPVRMGEILAYKK.

Catalysis depends on charge relay system; for autoendoproteolytic cleavage activity residues D96, H153, and S257. S257 acts as the Schiff-base intermediate with substrate; via pyruvic acid; for decarboxylase activity in catalysis. S257 carries the post-translational modification Pyruvic acid (Ser); by autocatalysis.

It belongs to the phosphatidylserine decarboxylase family. PSD-B subfamily. Prokaryotic type I sub-subfamily. In terms of assembly, heterodimer of a large membrane-associated beta subunit and a small pyruvoyl-containing alpha subunit. The cofactor is pyruvate. Is synthesized initially as an inactive proenzyme. Formation of the active enzyme involves a self-maturation process in which the active site pyruvoyl group is generated from an internal serine residue via an autocatalytic post-translational modification. Two non-identical subunits are generated from the proenzyme in this reaction, and the pyruvate is formed at the N-terminus of the alpha chain, which is derived from the carboxyl end of the proenzyme. The autoendoproteolytic cleavage occurs by a canonical serine protease mechanism, in which the side chain hydroxyl group of the serine supplies its oxygen atom to form the C-terminus of the beta chain, while the remainder of the serine residue undergoes an oxidative deamination to produce ammonia and the pyruvoyl prosthetic group on the alpha chain. During this reaction, the Ser that is part of the protease active site of the proenzyme becomes the pyruvoyl prosthetic group, which constitutes an essential element of the active site of the mature decarboxylase.

The protein resides in the cell membrane. It carries out the reaction a 1,2-diacyl-sn-glycero-3-phospho-L-serine + H(+) = a 1,2-diacyl-sn-glycero-3-phosphoethanolamine + CO2. Its pathway is phospholipid metabolism; phosphatidylethanolamine biosynthesis; phosphatidylethanolamine from CDP-diacylglycerol: step 2/2. Functionally, catalyzes the formation of phosphatidylethanolamine (PtdEtn) from phosphatidylserine (PtdSer). The polypeptide is Phosphatidylserine decarboxylase proenzyme (Haemophilus influenzae (strain 86-028NP)).